We begin with the raw amino-acid sequence, 295 residues long: Pyridoxal 5'-phosphate synthase subunit PdxS (295 aa).

D-ribose 5-phosphate is bound at residue aspartate 25. Lysine 82 functions as the Schiff-base intermediate with D-ribose 5-phosphate in the catalytic mechanism. Glycine 154 provides a ligand contact to D-ribose 5-phosphate. Position 166 (arginine 166) interacts with D-glyceraldehyde 3-phosphate. Residues glycine 215 and glycine 236–serine 237 contribute to the D-ribose 5-phosphate site.

This sequence belongs to the PdxS/SNZ family. As to quaternary structure, in the presence of PdxT, forms a dodecamer of heterodimers.

The enzyme catalyses aldehydo-D-ribose 5-phosphate + D-glyceraldehyde 3-phosphate + L-glutamine = pyridoxal 5'-phosphate + L-glutamate + phosphate + 3 H2O + H(+). Its pathway is cofactor biosynthesis; pyridoxal 5'-phosphate biosynthesis. In terms of biological role, catalyzes the formation of pyridoxal 5'-phosphate from ribose 5-phosphate (RBP), glyceraldehyde 3-phosphate (G3P) and ammonia. The ammonia is provided by the PdxT subunit. Can also use ribulose 5-phosphate and dihydroxyacetone phosphate as substrates, resulting from enzyme-catalyzed isomerization of RBP and G3P, respectively. This Staphylococcus carnosus (strain TM300) protein is Pyridoxal 5'-phosphate synthase subunit PdxS.